A 371-amino-acid chain; its full sequence is Galanin receptor type 2 (371 aa).

The Extracellular segment spans residues 1–27; it reads MNGSDSQGAEDSSQEGGGGWQPEAVLV. The N-linked (GlcNAc...) asparagine glycan is linked to Asn2. A helical transmembrane segment spans residues 28 to 48; the sequence is PLFFALIFLVGAVGNALVLAV. The Cytoplasmic portion of the chain corresponds to 49-59; that stretch reads LLRGGQAVSTT. A helical transmembrane segment spans residues 60-80; the sequence is NLFILNLGVADLCFILCCVPF. At 81 to 98 the chain is on the extracellular side; that stretch reads QATIYTLDDWVFGSLLCK. Cys97 and Cys174 are joined by a disulfide. The chain crosses the membrane as a helical span at residues 99–120; that stretch reads AVHFLIFLTMHASSFTLAAVSL. The Cytoplasmic segment spans residues 121–140; that stretch reads DRYLAIRYPLHSRELRTPRN. A helical transmembrane segment spans residues 141–161; that stretch reads ALAAIGLIWGLALLFSGPYLS. At 162 to 186 the chain is on the extracellular side; that stretch reads YYSQSQLANLTVCHPAWSAPRRRAM. Residues 187–207 traverse the membrane as a helical segment; that stretch reads DLCTFVFSYLLPVLVLSLTYA. Topologically, residues 208–236 are cytoplasmic; it reads RTLHYLWRTVDPVAAGSGSQRAKRKVTRM. The chain crosses the membrane as a helical span at residues 237–257; the sequence is IVIVAVLFCLCWMPHHALILC. Topologically, residues 258–259 are extracellular; sequence VW. Residues 260-280 form a helical membrane-spanning segment; that stretch reads FGRFPLTRATYALRILSHLVS. The Cytoplasmic portion of the chain corresponds to 281–371; sequence YANSCVNPIV…TLSRTLDPAC (91 aa).

This sequence belongs to the G-protein coupled receptor 1 family.

The protein resides in the cell membrane. Its function is as follows. Receptor for the hormone galanin, GALP and spexin-1. The activity of this receptor is mediated by G proteins that activate the phospholipase C/protein kinase C pathway (via G(q)) and that inhibit adenylyl cyclase (via G(i)). In Mus musculus (Mouse), this protein is Galanin receptor type 2 (Galr2).